Here is a 219-residue protein sequence, read N- to C-terminus: Protein GrpE (219 aa).

2 disordered regions span residues 1–32 (MSTT…LDAT) and 59–87 (FDGV…AERT).

It belongs to the GrpE family. Homodimer.

Its subcellular location is the cytoplasm. In terms of biological role, participates actively in the response to hyperosmotic and heat shock by preventing the aggregation of stress-denatured proteins, in association with DnaK and GrpE. It is the nucleotide exchange factor for DnaK and may function as a thermosensor. Unfolded proteins bind initially to DnaJ; upon interaction with the DnaJ-bound protein, DnaK hydrolyzes its bound ATP, resulting in the formation of a stable complex. GrpE releases ADP from DnaK; ATP binding to DnaK triggers the release of the substrate protein, thus completing the reaction cycle. Several rounds of ATP-dependent interactions between DnaJ, DnaK and GrpE are required for fully efficient folding. The protein is Protein GrpE of Corynebacterium diphtheriae (strain ATCC 700971 / NCTC 13129 / Biotype gravis).